Here is a 320-residue protein sequence, read N- to C-terminus: tRNA U34 carboxymethyltransferase (320 aa).

Carboxy-S-adenosyl-L-methionine-binding positions include K89, W103, K108, G128, 150–152 (DPT), 179–180 (IE), M194, Y198, and R313.

Belongs to the class I-like SAM-binding methyltransferase superfamily. CmoB family. In terms of assembly, homotetramer.

The enzyme catalyses carboxy-S-adenosyl-L-methionine + 5-hydroxyuridine(34) in tRNA = 5-carboxymethoxyuridine(34) in tRNA + S-adenosyl-L-homocysteine + H(+). In terms of biological role, catalyzes carboxymethyl transfer from carboxy-S-adenosyl-L-methionine (Cx-SAM) to 5-hydroxyuridine (ho5U) to form 5-carboxymethoxyuridine (cmo5U) at position 34 in tRNAs. In Glaesserella parasuis serovar 5 (strain SH0165) (Haemophilus parasuis), this protein is tRNA U34 carboxymethyltransferase.